Here is a 535-residue protein sequence, read N- to C-terminus: Succinate-semialdehyde dehydrogenase, mitochondrial (535 aa).

A mitochondrion-targeting transit peptide spans 1–47 (MATCIWLRSCGARRLGWTFPGCRLRPRAGGLVPASGPAPGPAQLRCY). N6-acetyllysine; alternate is present on lysine 126. Lysine 126 carries the post-translational modification N6-succinyllysine; alternate. An N6-succinyllysine mark is found at lysine 135 and lysine 184. NAD(+) is bound by residues arginine 213 and 228-231 (KPAE). Arginine 213 provides a ligand contact to substrate. N6-acetyllysine; alternate is present on lysine 265. Lysine 265 bears the N6-succinyllysine; alternate mark. 284-289 (GSTTTG) contacts NAD(+). The active-site Proton acceptor is glutamate 306. Substrate is bound at residue arginine 334. Residue cysteine 340 is the Nucleophile of the active site. Cysteine 340 and cysteine 342 are joined by a disulfide. N6-acetyllysine is present on lysine 365. Lysine 402 carries the N6-succinyllysine modification. At lysine 411 the chain carries N6-acetyllysine. Serine 498 contributes to the substrate binding site. Residue serine 499 is modified to Phosphoserine.

It belongs to the aldehyde dehydrogenase family. Homotetramer.

It localises to the mitochondrion. It catalyses the reaction succinate semialdehyde + NAD(+) + H2O = succinate + NADH + 2 H(+). The protein operates within amino-acid degradation; 4-aminobutanoate degradation. Its activity is regulated as follows. Redox-regulated. Inhibited under oxydizing conditions. Catalyzes one step in the degradation of the inhibitory neurotransmitter gamma-aminobutyric acid (GABA). This Pan paniscus (Pygmy chimpanzee) protein is Succinate-semialdehyde dehydrogenase, mitochondrial (ALDH5A1).